Consider the following 310-residue polypeptide: GMP synthase [glutamine-hydrolyzing] subunit B (310 aa).

In terms of domain architecture, GMPS ATP-PPase spans 2-185 (FKTEPFIEES…LGLPDQIAHR (184 aa)). 29 to 35 (SGGVDSA) is a binding site for ATP.

As to quaternary structure, heterodimer composed of a glutamine amidotransferase subunit (A) and a GMP-binding subunit (B).

The catalysed reaction is XMP + L-glutamine + ATP + H2O = GMP + L-glutamate + AMP + diphosphate + 2 H(+). Its pathway is purine metabolism; GMP biosynthesis; GMP from XMP (L-Gln route): step 1/1. Functionally, catalyzes the synthesis of GMP from XMP. The chain is GMP synthase [glutamine-hydrolyzing] subunit B from Methanococcus maripaludis (strain DSM 14266 / JCM 13030 / NBRC 101832 / S2 / LL).